Reading from the N-terminus, the 165-residue chain is MVDKNSLRKLMLLKRAELNDLEKSHLDQKINQKLMAFLITRPTIKNLALYIPIKNEVAFLDNFLDFLKLNKITSCFPSIVDQFNMKFIDQNNNEINPNDIDCFFIPLLAFNKANHRIGFGKGYYDRYLSLTSKKQLKIGIAYDFQYAEFTNDPWDYQLDLIICNG.

An ATP-binding site is contributed by 4-8; that stretch reads KNSLR. Substrate is bound by residues isoleucine 51 and glutamate 56. An ATP-binding site is contributed by 116 to 124; that stretch reads RIGFGKGYY. Aspartate 125 is a binding site for Mg(2+). ATP-binding residues include arginine 126 and tryptophan 154. Aspartate 155 contributes to the Mg(2+) binding site.

This sequence belongs to the 5-formyltetrahydrofolate cyclo-ligase family. In terms of assembly, monomer or homodimer. Mg(2+) serves as cofactor.

It localises to the cytoplasm. It carries out the reaction (6S)-5-formyl-5,6,7,8-tetrahydrofolate + ATP = (6R)-5,10-methenyltetrahydrofolate + ADP + phosphate. In terms of biological role, involved in folate metabolism. Catalyzes the irreversible conversion of 5-formyltetrahydrofolate (5-FTHF) to yield 5,10-methenyltetrahydrofolate. This is 5-formyltetrahydrofolate cyclo-ligase from Mycoplasma genitalium (strain ATCC 33530 / DSM 19775 / NCTC 10195 / G37) (Mycoplasmoides genitalium).